The following is a 441-amino-acid chain: BTB/POZ domain-containing protein At3g05675 (441 aa).

The BTB domain maps to 20–98 (SDIVVRLRNE…LYVVSDDVHE (79 aa)).

Its pathway is protein modification; protein ubiquitination. Its function is as follows. May act as a substrate-specific adapter of an E3 ubiquitin-protein ligase complex (CUL3-RBX1-BTB) which mediates the ubiquitination and subsequent proteasomal degradation of target proteins. This Arabidopsis thaliana (Mouse-ear cress) protein is BTB/POZ domain-containing protein At3g05675.